Consider the following 208-residue polypeptide: FAS-associated death domain protein (208 aa).

The region spanning 3–81 (PFLVLLHSVS…RHDLLRRVDD (79 aa)) is the DED domain. Positions 97-181 (LCAAFNVICD…LVADLVQEVQ (85 aa)) constitute a Death domain. Residue Arg-117 is glycosylated ((Microbial infection) N-beta-linked (GlcNAc) arginine). The segment at 187–208 (QNRSGAMSPMSWNSDASTSEAS) is disordered. Position 194 is a phosphoserine (Ser-194).

In terms of assembly, can self-associate. Component of the AIM2 PANoptosome complex, a multiprotein complex that drives inflammatory cell death (PANoptosis). Component of the death-induced signaling complex (DISC) composed of cell surface receptor FAS/CD95 or TNFRSF1A, adapter protein FADD and the CASP8 protease; recruitment of CASP8 to the complex is required for processing of CASP8 into the p18 and p10 subunits. Interacts (via death domain) with FAS (via death domain). Interacts directly (via DED domain) with NOL3 (via CARD domain); inhibits death-inducing signaling complex (DISC) assembly by inhibiting the increase in FAS-FADD binding induced by FAS activation. Interacts with CFLAR, PEA15 and MBD4. When phosphorylated, part of a complex containing HIPK3 and FAS. May interact with MAVS/IPS1. Interacts with MOCV v-CFLAR protein and PIDD1. Interacts with RIPK1 and TRADD. Interacts with stimulated TNFRSF10B. Interacts with DDX24. (Microbial infection) Interacts with human papillomavirus 16/HPV16 protein E6. As to quaternary structure, (Microbial infection) Interacts with molluscum contagiosum virus proteins MC159L/v-CFLAR and MC160L. Post-translationally, (Microbial infection) Glycosylated at Arg-117 by enteropathogenic E.coli protein NleB1, C.rodentium protein NleB and S.typhimurium protein Ssek1: arginine GlcNAcylation prevents recruitment of caspase-8 or caspase-10 to the activated Fas (CD95) or TNFR-1 receptors. As to expression, expressed in a wide variety of tissues, except for peripheral blood mononuclear leukocytes.

Its subcellular location is the cytoplasm. Its function is as follows. Apoptotic adapter molecule that recruits caspases CASP8 or CASP10 to the activated FAS/CD95 or TNFRSF1A/TNFR-1 receptors. The resulting aggregate called the death-inducing signaling complex (DISC) performs CASP8 proteolytic activation. Active CASP8 initiates the subsequent cascade of caspases mediating apoptosis. Involved in interferon-mediated antiviral immune response, playing a role in the positive regulation of interferon signaling. This is FAS-associated death domain protein from Homo sapiens (Human).